We begin with the raw amino-acid sequence, 769 residues long: DNA gyrase subunit B (769 aa).

The region spanning 414–528 (SEIYLVEGDS…NGHIYLAQPP (115 aa)) is the Toprim domain. Mg(2+) is bound by residues glutamate 420, aspartate 493, and aspartate 495.

Belongs to the type II topoisomerase GyrB family. Heterotetramer, composed of two GyrA and two GyrB chains. In the heterotetramer, GyrA contains the active site tyrosine that forms a transient covalent intermediate with DNA, while GyrB binds cofactors and catalyzes ATP hydrolysis. Requires Mg(2+) as cofactor. It depends on Mn(2+) as a cofactor. The cofactor is Ca(2+).

The protein localises to the cytoplasm. It carries out the reaction ATP-dependent breakage, passage and rejoining of double-stranded DNA.. Its function is as follows. A type II topoisomerase that negatively supercoils closed circular double-stranded (ds) DNA in an ATP-dependent manner to modulate DNA topology and maintain chromosomes in an underwound state. Negative supercoiling favors strand separation, and DNA replication, transcription, recombination and repair, all of which involve strand separation. Also able to catalyze the interconversion of other topological isomers of dsDNA rings, including catenanes and knotted rings. Type II topoisomerases break and join 2 DNA strands simultaneously in an ATP-dependent manner. In Campylobacter jejuni subsp. jejuni serotype O:2 (strain ATCC 700819 / NCTC 11168), this protein is DNA gyrase subunit B.